The sequence spans 156 residues: Ribonuclease 7 (156 aa).

An N-terminal signal peptide occupies residues 1 to 28; that stretch reads MAPARAGFCPLLLLLLLGLWVAEIPVSA. The segment at 29 to 32 is important for antibacterial activity; that stretch reads KPKG. Histidine 43 (proton acceptor) is an active-site residue. DUMP-binding residues include histidine 43, lysine 66, asparagine 69, and threonine 70. 4 disulfide bridges follow: cysteine 51/cysteine 109, cysteine 65/cysteine 119, cysteine 83/cysteine 134, and cysteine 90/cysteine 97. N-linked (GlcNAc...) asparagine glycosylation occurs at asparagine 127. The segment at 139 to 140 is important for antibacterial activity; the sequence is KK. Residues histidine 151 and arginine 154 each contribute to the dUMP site. Histidine 151 acts as the Proton donor in catalysis.

In terms of tissue distribution, expressed in collecting ducts in kidney, and in apical uroepithelium in bladder (at protein level). Expressed in various epithelial tissues including skin, respiratory tract, genito-urinary tract and, at a low level, in the gut. Expressed in liver, kidney, skeletal muscle and heart.

The protein localises to the secreted. Functionally, exhibits a potent RNase activity. Has broad-spectrum antimicrobial activity against many pathogenic microorganisms including uropathogenic E.coli (UPEC), and remarkably potent activity (lethal dose of 90% &lt; 30 nM) against a vancomycin resistant Enterococcus faecium. Causes loss of bacterial membrane integrity. Probably contributes to urinary tract sterility. Bactericidal activity is independent of RNase activity. The sequence is that of Ribonuclease 7 (RNASE7) from Homo sapiens (Human).